We begin with the raw amino-acid sequence, 519 residues long: Ubiquitin carboxyl-terminal hydrolase 30 (519 aa).

Over 1-52 the chain is Mitochondrial intermembrane; that stretch reads MSWAPVSTWSRRTPLAACCSAPELPPAGAWKACAAGSLRIGPQGRCKMMKNW. A helical membrane pass occupies residues 53–73; that stretch reads GMIGGIAAALAAGIYVLWGPI. The Cytoplasmic segment spans residues 74–519; the sequence is SDRKKYRKGL…HPEDQRAAEK (446 aa). A USP domain is found at 85-504; that stretch reads PGLLNLGNTC…SAYLLFYERI (420 aa). Cysteine 94 (nucleophile) is an active-site residue. Residues 379-405 are disordered; the sequence is SKQPANHLSAAEQETTDGKEGGAQNPT. The active-site Proton acceptor is histidine 455.

Belongs to the peptidase C19 family.

The protein localises to the mitochondrion outer membrane. The enzyme catalyses Thiol-dependent hydrolysis of ester, thioester, amide, peptide and isopeptide bonds formed by the C-terminal Gly of ubiquitin (a 76-residue protein attached to proteins as an intracellular targeting signal).. Deubiquitinating enzyme that acts as a key inhibitor of mitophagy by counteracting the action of parkin (PRKN). This chain is Ubiquitin carboxyl-terminal hydrolase 30 (usp30), found in Xenopus tropicalis (Western clawed frog).